We begin with the raw amino-acid sequence, 138 residues long: Cytosolic calcium-binding protein 2 (138 aa).

Low complexity predominate over residues 31-41 (TEVTQQPEESV). The interval 31–122 (TEVTQQPEES…KKTEVVEEKQ (92 aa)) is disordered. 6 tandem repeats follow at residues 62–68 (VEEAEKK), 71–75 (ETEKK), 92–98 (VEEEEKK), 109–114 (VEEEKK), 118–122 (VEEKQ), and 131–135 (VAVEK). The 6 X 5 AA approximate repeats of V-E-E-K-K stretch occupies residues 62–135 (VEEAEKKDEE…AAAEEVAVEK (74 aa)). A compositionally biased stretch (basic and acidic residues) spans 64 to 85 (EAEKKDEETEKKTEEKDEKTEV). A compositionally biased stretch (basic and acidic residues) spans 110 to 122 (EEEKKTEVVEEKQ).

In terms of tissue distribution, predominantly expressed in roots (e.g. in endodermis in the stele) and stems, to a lower extent in shoots, flowers and siliques, and, at low levels, in leaves.

It localises to the cytoplasm. It is found in the cytosol. Its function is as follows. Binds calcium Ca(2+) and may act as a signal mediator to buffer Ca(2+). The protein is Cytosolic calcium-binding protein 2 of Arabidopsis thaliana (Mouse-ear cress).